The sequence spans 334 residues: Serpentine receptor class alpha-11 (334 aa).

The Extracellular segment spans residues 1-23 (MTTNNPVCASDAHMEMYSSKLYT). Residues 24-44 (SALFLNLIIATTSMILTGFAI) form a helical membrane-spanning segment. The Cytoplasmic segment spans residues 45-57 (QKLFMESIINIST). Residues 58–80 (RMFLFCGLMCCSLHQTAYIVLRI) form a helical membrane-spanning segment. Topologically, residues 81–105 (QVIYQVFFKLSEPCNLYYPAIDCKY) are extracellular. A helical membrane pass occupies residues 106–126 (VTFSLVAGNTGMIFIQSAMTI). The Cytoplasmic portion of the chain corresponds to 127 to 145 (DRIFATIFPKLWPKLKYWP). A helical transmembrane segment spans residues 146–166 (GVVLSILMIACNYANVQIIFW). Topologically, residues 167–191 (GDPLTEYVPTCGQFPSKSVNRFQTF) are extracellular. The helical transmembrane segment at 192–212 (LAIALYMSIAHMVINVIILYI) threads the bilayer. At 213–239 (NVLQDRQQSKSFNVNQRYQSREALKSS) the chain is on the cytoplasmic side. Residues 240–260 (QAIFFLSMSQFFACLIYSVFT) form a helical membrane-spanning segment. Over 261–277 (KVFLEFQLNLSPLQSGL) the chain is Extracellular. A helical membrane pass occupies residues 278-298 (VLALSYTTPYACIAIPSLIIF). At 299-334 (TFRFIKNQRLRNINELRSQTETGDECMRKIAKIWEK) the chain is on the cytoplasmic side.

This sequence belongs to the nematode receptor-like protein sra family. In terms of tissue distribution, expressed in interneurons AIY and AVB in L1 larvae. In adults, strong expression is seen in AIY and AIA but only weak expression in AVB.

It localises to the membrane. In terms of biological role, a G protein-coupled receptor required for olfactory imprinting a requisite in ordorant response such as benzaldehyde and isoamylalcohol. The polypeptide is Serpentine receptor class alpha-11 (sra-11) (Caenorhabditis elegans).